Here is a 448-residue protein sequence, read N- to C-terminus: Phosphoglucosamine mutase (448 aa).

Residue S100 is the Phosphoserine intermediate of the active site. Residues S100, D240, D242, and D244 each coordinate Mg(2+). Residue S100 is modified to Phosphoserine.

Belongs to the phosphohexose mutase family. It depends on Mg(2+) as a cofactor. Activated by phosphorylation.

It catalyses the reaction alpha-D-glucosamine 1-phosphate = D-glucosamine 6-phosphate. Its function is as follows. Catalyzes the conversion of glucosamine-6-phosphate to glucosamine-1-phosphate. This is Phosphoglucosamine mutase from Clostridium beijerinckii (strain ATCC 51743 / NCIMB 8052) (Clostridium acetobutylicum).